Here is a 58-residue protein sequence, read N- to C-terminus: MSTIKIKQVKSRIGAPADQKRTLDALGLRKLNRVVEHESTSSILGMVDKVKHLVAIVK.

The protein belongs to the universal ribosomal protein uL30 family. In terms of assembly, part of the 50S ribosomal subunit.

This chain is Large ribosomal subunit protein uL30, found in Bacteroides thetaiotaomicron (strain ATCC 29148 / DSM 2079 / JCM 5827 / CCUG 10774 / NCTC 10582 / VPI-5482 / E50).